We begin with the raw amino-acid sequence, 326 residues long: uncharacterized protein (326 aa).

The S4 RNA-binding domain maps to 15 to 76 (VRIEKFCLKL…IEPYLHNHSE (62 aa)). Residue Asp-147 is part of the active site.

It belongs to the pseudouridine synthase RluA family.

The catalysed reaction is a uridine in RNA = a pseudouridine in RNA. This is an uncharacterized protein from Mycoplasma pneumoniae (strain ATCC 29342 / M129 / Subtype 1) (Mycoplasmoides pneumoniae).